A 161-amino-acid polypeptide reads, in one-letter code: Peroxynitrite isomerase 2 (161 aa).

Positions 17–23 match the GXWXGXG motif; the sequence is GTWAGQG. Histidine 152 is a binding site for heme b.

The protein belongs to the nitrobindin family. In terms of assembly, homodimer. The cofactor is heme b.

It catalyses the reaction peroxynitrite = nitrate. Its pathway is nitrogen metabolism. Functionally, heme-binding protein able to scavenge peroxynitrite and to protect free L-tyrosine against peroxynitrite-mediated nitration, by acting as a peroxynitrite isomerase that converts peroxynitrite to nitrate. Therefore, this protein likely plays a role in peroxynitrite sensing and in the detoxification of reactive nitrogen and oxygen species (RNS and ROS, respectively). Is able to bind nitric oxide (NO) in vitro, but may act as a sensor of peroxynitrite levels in vivo. The sequence is that of Peroxynitrite isomerase 2 from Mycobacterium marinum (strain ATCC BAA-535 / M).